Reading from the N-terminus, the 462-residue chain is Violaxanthin de-epoxidase, chloroplastic (462 aa).

The cysteines at positions 231 and 362 are disulfide-linked. The stretch at 372 to 437 forms a coiled coil; the sequence is IEKTVEEGER…RELSKEEMEF (66 aa). Residues 380–391 are involved in the binding to the thylakoid membrane; that stretch reads ERIIVKEVEEIE.

This sequence belongs to the calycin superfamily. Lipocalin family. As to quaternary structure, interacts in vitro with LTO1.

The protein resides in the plastid. Its subcellular location is the chloroplast thylakoid membrane. It carries out the reaction all-trans-violaxanthin + 2 L-ascorbate = all-trans-zeaxanthin + 2 L-dehydroascorbate + 2 H2O. With respect to regulation, activity limited by low ascorbate availability. Feedback inhibition by zeaxanthin. Requires the presence of micelle-forming lipids such as monogalactosyldiacylglyceride (MGDG). Low concentration of bilayer forming lipids, such as digalactosyldiacylglyceride (DGDG) or phosphatidylcholine, supports a slower but nearly complete activity. 80% of the specific activity in lumenal chloroplast fractions is lost in vitro in the presence of reduced thioredoxin. Part of the xanthophyll (or violaxanthin) cycle for controlling the concentration of zeaxanthin in chloroplasts. Catalyzes the two-step mono de-epoxidation reaction. Stereospecific for all-trans xanthophylls. Zeaxanthin induces the dissipation of excitation energy in the chlorophyll of the light-harvesting protein complex of photosystem II. The sequence is that of Violaxanthin de-epoxidase, chloroplastic from Arabidopsis thaliana (Mouse-ear cress).